A 34-amino-acid polypeptide reads, in one-letter code: Photosystem II reaction center protein M (34 aa).

The chain crosses the membrane as a helical span at residues 5 to 25; it reads ILAFIATALFILIPTAFLLIL.

This sequence belongs to the PsbM family. PSII is composed of 1 copy each of membrane proteins PsbA, PsbB, PsbC, PsbD, PsbE, PsbF, PsbH, PsbI, PsbJ, PsbK, PsbL, PsbM, PsbT, PsbX, PsbY, PsbZ, Psb30/Ycf12, at least 3 peripheral proteins of the oxygen-evolving complex and a large number of cofactors. It forms dimeric complexes.

It localises to the plastid. Its subcellular location is the chloroplast thylakoid membrane. Functionally, one of the components of the core complex of photosystem II (PSII). PSII is a light-driven water:plastoquinone oxidoreductase that uses light energy to abstract electrons from H(2)O, generating O(2) and a proton gradient subsequently used for ATP formation. It consists of a core antenna complex that captures photons, and an electron transfer chain that converts photonic excitation into a charge separation. This subunit is found at the monomer-monomer interface. This is Photosystem II reaction center protein M from Angiopteris evecta (Mule's foot fern).